We begin with the raw amino-acid sequence, 552 residues long: MAAKDLKFGNDARKKMLKGVNILANAVKVTLGPKGRNVVLDKSYGAPSITKDGVSVARDIELEDKFENMGAQMLKEVASKANDAAGDGTTTATVLAQSIVTEGLKAVAAGMNPMDLKRGIDKAVDAAVEELKKLSKPCKDSKEIAQVGTISANADEKVGTLISDAMKRVTNEGVITVEEASGLEDGLIVVEGMQFDRGYLSPYFINKQESSSIEFDNPYILLVDKKISNIRDMLSILEVVAKEGKPLLIIAEDVEGEALATLVVNTMRGIVKVAAVKAPGFGDRRKEMLQDIAVLTHGHVISEETGDSLEKATQENLGKAKRVVITKDATTIIDGAGEKSRIEARVQNIRKQIENATSDYDKEKLQERVAKLSGGVAVIKVGAPTEIAMKEKKARVEDALQATRAAVEEGVVPGGGVALIRVASKIANSSLKGDNEDQNVGIRVALRAMESPLRQIVVNAGEEASVIANKVKENKGNDNYGYNAQTEAYGDMIEMGILDPTKVTRSALQYAASIAGLMITTECMVTDLPKEEKASDMGSGGMGGMGGMNGMM.

Residues 30–33, Lys-51, 87–91, Gly-415, and Asp-499 contribute to the ATP site; these read TLGP and DGTTT.

This sequence belongs to the chaperonin (HSP60) family. As to quaternary structure, forms a cylinder of 14 subunits composed of two heptameric rings stacked back-to-back. Interacts with the co-chaperonin GroES.

The protein localises to the cytoplasm. The catalysed reaction is ATP + H2O + a folded polypeptide = ADP + phosphate + an unfolded polypeptide.. In terms of biological role, together with its co-chaperonin GroES, plays an essential role in assisting protein folding. The GroEL-GroES system forms a nano-cage that allows encapsulation of the non-native substrate proteins and provides a physical environment optimized to promote and accelerate protein folding. The sequence is that of Chaperonin GroEL from Hamiltonella defensa subsp. Acyrthosiphon pisum (strain 5AT).